We begin with the raw amino-acid sequence, 613 residues long: DNA repair and telomere maintenance protein nbs1 (613 aa).

In terms of domain architecture, FHA spans 23–86 (YIVGRNVSDD…FGTKVNEKVV (64 aa)). 2 BRCT domains span residues 107 to 186 (FTIN…YLST) and 228 to 302 (GFSC…KIII). Serine 355 is modified (phosphoserine). Disordered regions lie at residues 381-428 (KEPE…GQGK) and 546-613 (TEVF…KFHF). The segment covering 387–399 (LSNQSNNGSAQNK) has biased composition (polar residues). A compositionally biased stretch (basic and acidic residues) spans 400 to 409 (KSGDNSEKTK). The span at 574-592 (SSDKSGKSSISKKSSNSFK) shows a compositional bias: low complexity. The FxF/Y motif motif lies at 611–613 (FHF).

Belongs to the Nibrin family. In terms of assembly, component of the MRN complex composed of two heterodimers rad32 and rad50 associated with a single nbs1. Interacts with (phosphorylated) ctp1/CtIP. Interacts (via FxF/Y motif) with tel1/atm.

The protein resides in the nucleus. The protein localises to the chromosome. It is found in the telomere. In terms of biological role, component of the MRN complex, which plays a central role in double-strand break (DSB) repair, DNA recombination, maintenance of telomere integrity and meiosis. The MRN complex is involved in the repair of DNA double-strand breaks (DSBs) via homologous recombination (HR), an error-free mechanism which primarily occurs during S and G2 phases. The complex (1) mediates the end resection of damaged DNA, which generates proper single-stranded DNA, a key initial steps in HR, and is (2) required for the recruitment of other repair factors and efficient activation of tel1/atm upon DNA damage. The MRN complex possesses single-strand endonuclease activity and double-strand-specific 3'-5' exonuclease activity, which are provided by MRE11, to initiate end resection, which is required for single-strand invasion and recombination. Within the MRN complex, nbs1 acts as a protein-protein adapter, which specifically recognizes and binds phosphorylated proteins, promoting their recruitment to DNA damage sites. Recruits rad32 and rad50 components of the MRN complex to DSBs in response to DNA damage. Promotes the recruitment of tel1/atm to the DNA damage sites, activating tel1/atm function. Mediates the recruitment of phosphorylated ctp1/CtIP to DSBs, leading to cooperation between the MRN complex and ctp1/CtIP to initiate end resection. This Schizosaccharomyces pombe (strain 972 / ATCC 24843) (Fission yeast) protein is DNA repair and telomere maintenance protein nbs1.